The primary structure comprises 246 residues: uncharacterized protein (246 aa).

3 disordered regions span residues 29 to 54, 93 to 114, and 148 to 246; these read SLETDEPTSSSPSLSSNSDVSQENGS, LRRTMSQNSLEYDEEDEKEDKF, and PIPP…SVVI. Positions 35 to 49 are enriched in low complexity; it reads PTSSSPSLSSNSDVS. The segment covering 172–183 has biased composition (polar residues); the sequence is RQQTNNIRTLHV. Composition is skewed to low complexity over residues 190–203 and 214–225; these read SSSSGSKTHSPSSS and SKTTKNRSSNSS. N219 carries N-linked (GlcNAc...) asparagine glycosylation. Residues 235–246 show a composition bias toward polar residues; the sequence is LTPSPTFESVVI.

This is an uncharacterized protein from Caenorhabditis elegans.